We begin with the raw amino-acid sequence, 441 residues long: Histidine--tRNA ligase (441 aa).

It belongs to the class-II aminoacyl-tRNA synthetase family. As to quaternary structure, homodimer.

The protein resides in the cytoplasm. It carries out the reaction tRNA(His) + L-histidine + ATP = L-histidyl-tRNA(His) + AMP + diphosphate + H(+). This is Histidine--tRNA ligase from Koribacter versatilis (strain Ellin345).